Reading from the N-terminus, the 723-residue chain is Polyribonucleotide nucleotidyltransferase (723 aa).

2 residues coordinate Mg(2+): aspartate 488 and aspartate 494. In terms of domain architecture, KH spans 555-614 (PKIITLNIKPEKIKDVIGPGGKQINAIIEETGVKIDIEQDGTVYIASQDQAMNRKAIAII). Residues 624–692 (GEVYTGKVRR…HQGRVNLSRK (69 aa)) form the S1 motif domain. A disordered region spans residues 692 to 723 (KALLEKKEQPEGDKKPQAEKKFYPKTKKPESK). A compositionally biased stretch (basic and acidic residues) spans 693–723 (ALLEKKEQPEGDKKPQAEKKFYPKTKKPESK).

This sequence belongs to the polyribonucleotide nucleotidyltransferase family. The cofactor is Mg(2+).

The protein localises to the cytoplasm. The catalysed reaction is RNA(n+1) + phosphate = RNA(n) + a ribonucleoside 5'-diphosphate. Functionally, involved in mRNA degradation. Catalyzes the phosphorolysis of single-stranded polyribonucleotides processively in the 3'- to 5'-direction. In Listeria welshimeri serovar 6b (strain ATCC 35897 / DSM 20650 / CCUG 15529 / CIP 8149 / NCTC 11857 / SLCC 5334 / V8), this protein is Polyribonucleotide nucleotidyltransferase.